The chain runs to 205 residues: Guanylyl cyclase-activating protein 1 (205 aa).

Glycine 2 is lipidated: N-myristoyl glycine. Asparagine 3 carries the deamidated asparagine modification. EF-hand domains are found at residues serine 14–serine 49, tryptophan 51–glycine 86, lysine 87–isoleucine 122, and threonine 131–leucine 166. Ca(2+) contacts are provided by aspartate 64, asparagine 66, aspartate 68, tyrosine 70, glutamate 75, aspartate 100, aspartate 102, asparagine 104, cysteine 106, glutamate 111, aspartate 144, asparagine 146, aspartate 148, glutamate 150, and glutamate 155. A disordered region spans residues asparagine 185 to glycine 205.

In terms of assembly, homodimer. As to expression, detected in the retina. Detected in rod and cone photoreceptor cells (at protein level). Also present in certain pinealocytes.

The protein resides in the membrane. It localises to the photoreceptor inner segment. It is found in the cell projection. The protein localises to the cilium. Its subcellular location is the photoreceptor outer segment. Its function is as follows. Stimulates retinal guanylyl cyclase when free calcium ions concentration is low and inhibits guanylyl cyclase when free calcium ions concentration is elevated. This Ca(2+)-sensitive regulation of retinal guanylyl cyclase is a key event in recovery of the dark state of rod photoreceptors following light exposure. May be involved in cone photoreceptor light response and recovery of response in bright light. This is Guanylyl cyclase-activating protein 1 (GUCA1A) from Bos taurus (Bovine).